Reading from the N-terminus, the 252-residue chain is NAC domain-containing protein 83 (252 aa).

Residues 14 to 160 (LPPGFRFHPT…NWVLCRIFLK (147 aa)) enclose the NAC domain. The DNA-binding element occupies 110 to 166 (VGLKKTLVFYKGKPPHGSRTDWIMHEYRLSSSPPSSMGPTQNWVLCRIFLKKRAGNK). Disordered regions lie at residues 165–194 (NKNDDDDGDSRNLRHNNNNNSSDQIEIITT) and 217–252 (LNLLPSSPSSDHASSGVTTEIFSSSDEETSSCNSFR). Composition is skewed to low complexity over residues 180–194 (NNNNNSSDQIEIITT) and 219–252 (LLPSSPSSDHASSGVTTEIFSSSDEETSSCNSFR). Residues 213 to 226 (RTTDLNLLPSSPSS) are PEST-like.

As to quaternary structure, interacts with NAC007/VND4, NAC026/VND5 and NAC030/VND7. Interacts with the mungbean yellow mosaic virus (MYMV) AC1 replication-associated protein. Expressed in xylem and phloem cells in roots and inflorescence stems. Highly expressed in senescent leaves. Expressed in roots, and abscission and dehiscence tissues, such as axils of bracts and abscission zones in cauline leaves and siliques.

The protein localises to the nucleus. Functionally, transcriptional repressor that negatively regulates the expression of genes involved in xylem vessel formation. Represses the transcriptional activation activity of NAC030/VND7, which regulates protoxylem vessel differentiation by promoting immature xylem vessel-specific genes expression. Transcriptional activator that regulates the COLD-REGULATED (COR15A and COR15B) and RESPONSIVE TO DEHYDRATION (LTI78/RD29A and LTI65/RD29B) genes by binding directly to their promoters. Mediates signaling crosstalk between salt stress response and leaf aging process. May play a role in DNA replication of mungbean yellow mosaic virus. The polypeptide is NAC domain-containing protein 83 (Arabidopsis thaliana (Mouse-ear cress)).